A 517-amino-acid chain; its full sequence is L-amino-acid oxidase (517 aa).

An N-terminal signal peptide occupies residues M1–A19. A disulfide bridge connects residues C29 and C192. Residues M62 to A63, E82 to A83, R90, and G106 to R109 contribute to the FAD site. R109 contacts substrate. A glycan (N-linked (GlcNAc...) asparagine) is linked at N191. V280 is an FAD binding site. Residues C350 and C431 are joined by a disulfide bond. A glycan (N-linked (GlcNAc...) asparagine) is linked at N380. Residue Y391 coordinates substrate. FAD contacts are provided by residues E476 and G483–T488. Position 483–484 (G483–W484) interacts with substrate.

This sequence belongs to the flavin monoamine oxidase family. FIG1 subfamily. In terms of assembly, monomer. This is in contrast with most of its orthologs, that are non-covalently linked homodimers. Requires FAD as cofactor. N-glycosylated. In terms of tissue distribution, expressed by the venom gland.

It is found in the secreted. It catalyses the reaction an L-alpha-amino acid + O2 + H2O = a 2-oxocarboxylate + H2O2 + NH4(+). The catalysed reaction is L-leucine + O2 + H2O = 4-methyl-2-oxopentanoate + H2O2 + NH4(+). The enzyme catalyses L-phenylalanine + O2 + H2O = 3-phenylpyruvate + H2O2 + NH4(+). It carries out the reaction L-tryptophan + O2 + H2O = indole-3-pyruvate + H2O2 + NH4(+). It catalyses the reaction L-methionine + O2 + H2O = 4-methylsulfanyl-2-oxobutanoate + H2O2 + NH4(+). The catalysed reaction is L-isoleucine + O2 + H2O = (S)-3-methyl-2-oxopentanoate + H2O2 + NH4(+). The enzyme catalyses L-arginine + O2 + H2O = 5-guanidino-2-oxopentanoate + H2O2 + NH4(+). It carries out the reaction L-aspartate + O2 + H2O = oxaloacetate + H2O2 + NH4(+). It catalyses the reaction L-histidine + O2 + H2O = 3-(imidazol-5-yl)pyruvate + H2O2 + NH4(+). The catalysed reaction is L-asparagine + O2 + H2O = 2-oxosuccinamate + H2O2 + NH4(+). The enzyme catalyses L-tyrosine + O2 + H2O = 3-(4-hydroxyphenyl)pyruvate + H2O2 + NH4(+). It carries out the reaction L-glutamine + O2 + H2O = 2-oxoglutaramate + H2O2 + NH4(+). It catalyses the reaction L-alanine + O2 + H2O = pyruvate + H2O2 + NH4(+). The catalysed reaction is L-lysine + O2 + H2O = 6-amino-2-oxohexanoate + H2O2 + NH4(+). The enzyme catalyses L-glutamate + O2 + H2O = H2O2 + 2-oxoglutarate + NH4(+). Its function is as follows. Catalyzes an oxidative deamination of predominantly hydrophobic and aromatic L-amino acids, thus producing hydrogen peroxide that may contribute to the diverse toxic effects of this enzyme. Is highly active against L-Tyr, L-Asp, L-Phe, L-Glu, L-Trp, L-His, L-Gln, L-Ile, L-Met, L-Leu and moderately active against L-Lys, L-Arg, L-Ala and L-Asn. Exhibits diverse biological activities, such as edema, inflammatory cell infiltration, cytotoxicity and apoptosis, as well as induction of platelet aggregation. Effects of snake L-amino oxidases on platelets are controversial, since they either induce aggregation or inhibit agonist-induced aggregation. These different effects are probably due to different experimental conditions. This protein may also induce hemorrhage, hemolysis, and have antibacterial and antiparasitic activities. The sequence is that of L-amino-acid oxidase from Bungarus fasciatus (Banded krait).